The chain runs to 155 residues: Ribonuclease H (155 aa).

The RNase H type-1 domain maps to 4 to 145 (ETKVIEIYTD…ADALARKAIT (142 aa)). Mg(2+) contacts are provided by aspartate 13, glutamate 51, aspartate 73, and aspartate 137.

This sequence belongs to the RNase H family. Monomer. The cofactor is Mg(2+).

Its subcellular location is the cytoplasm. The catalysed reaction is Endonucleolytic cleavage to 5'-phosphomonoester.. Its function is as follows. Endonuclease that specifically degrades the RNA of RNA-DNA hybrids. The protein is Ribonuclease H of Bartonella bacilliformis (strain ATCC 35685 / KC583 / Herrer 020/F12,63).